A 1313-amino-acid polypeptide reads, in one-letter code: Kinesin-like protein KIN-12B (1313 aa).

A disordered region spans residues 1–74 (MKHFMMPRNA…PPRPPSSNPL (74 aa)). Residues 17-26 (ESQSPNPSLT) show a composition bias toward polar residues. Residues 96-431 (GVKVIVRMKP…LRFAQRAKAI (336 aa)) enclose the Kinesin motor domain. 170 to 177 (GQTGSGKT) lines the ATP pocket. 3 microtubules-binding regions span residues 298-302 (SSRSH), 331-337 (VDLAGSE), and 380-384 (HIPYR). The tract at residues 429–467 (KAIQNKAIVNEVMQDDVNFLREVIRQLRDELQRVKDDKG) is neck. The segment at 685–709 (ESASPKIRNSRKSLRTTSMSTASQK) is disordered. Residues 699–708 (RTTSMSTASQ) show a composition bias toward polar residues. Coiled-coil stretches lie at residues 932–1003 (LDEE…YTDS), 1062–1130 (AEEL…RIRE), and 1167–1241 (EKEV…TEIS).

The protein belongs to the TRAFAC class myosin-kinesin ATPase superfamily. Kinesin family. KIN-12 subfamily. Homodimer and heterodimer with KIN12A. Interacts with TIO.

The protein resides in the cytoplasm. The protein localises to the cytoskeleton. It localises to the phragmoplast. In terms of biological role, plus-end directed kinesin-like motor enzyme that plays a critical role in the organization of phragmoplast microtubules during cytokinesis. Constitutes a signaling module in association with serine/threonine-protein kinase TIO that is required to support phragmoplast expansion and cell-plate growth in plant cells. This chain is Kinesin-like protein KIN-12B, found in Arabidopsis thaliana (Mouse-ear cress).